Here is a 90-residue protein sequence, read N- to C-terminus: DNA-binding protein HU-beta (90 aa).

Belongs to the bacterial histone-like protein family. As to quaternary structure, heterodimer of an alpha and a beta chain.

Histone-like DNA-binding protein which is capable of wrapping DNA to stabilize it, and thus to prevent its denaturation under extreme environmental conditions. The polypeptide is DNA-binding protein HU-beta (hupB) (Pseudomonas fluorescens (strain ATCC BAA-477 / NRRL B-23932 / Pf-5)).